Consider the following 446-residue polypeptide: Ubiquitin carboxyl-terminal hydrolase MINDY-3 (446 aa).

The active-site Nucleophile is the C51. Basic and acidic residues predominate over residues 117–128 (DNSDITDSHPEP). Residues 117-137 (DNSDITDSHPEPESSQPTDTP) form a disordered region. H288 functions as the Proton acceptor in the catalytic mechanism.

Belongs to the MINDY deubiquitinase family. FAM188 subfamily.

It is found in the nucleus. The catalysed reaction is Thiol-dependent hydrolysis of ester, thioester, amide, peptide and isopeptide bonds formed by the C-terminal Gly of ubiquitin (a 76-residue protein attached to proteins as an intracellular targeting signal).. Functionally, hydrolase that can remove 'Lys-48'-linked conjugated ubiquitin from proteins. The sequence is that of Ubiquitin carboxyl-terminal hydrolase MINDY-3 (mindy3) from Danio rerio (Zebrafish).